A 334-amino-acid polypeptide reads, in one-letter code: Leucine-rich repeat-containing protein 39 (334 aa).

LRR repeat units lie at residues 59 to 82, 83 to 105, 106 to 128, 129 to 151, 153 to 175, 176 to 198, 199 to 221, 223 to 244, 245 to 269, and 272 to 295; these read EDGR…LLKL, NQLQ…IGRF, QHLI…IGLL, TRLQ…LSNC, SLEK…LSKL, LKLT…VLDM, PALE…LDRM, SLHT…IRNM, KNLG…EMTS, and FVNF…VDGE.

Interacts with MYH7 (via C-terminus). Expressed in heart and skeletal muscle (at protein level). Also detected in kidney (at protein level). Not detected in other tissues tested (at protein level).

It localises to the cytoplasm. The protein localises to the myofibril. It is found in the sarcomere. The protein resides in the m line. Its function is as follows. Component of the sarcomeric M-band which plays a role in myocyte response to biomechanical stress. May regulate expression of other M-band proteins via an SRF-dependent pathway. Important for normal contractile function in heart. This is Leucine-rich repeat-containing protein 39 from Rattus norvegicus (Rat).